A 242-amino-acid chain; its full sequence is B-box zinc finger protein 20 (242 aa).

Positions 5, 8, 28, 33, 58, 61, 81, and 91 each coordinate Zn(2+). The segment at 5-47 adopts a B box-type 1; atypical zinc-finger fold; sequence CAVCDKEEASVFCCADEAALCNGCDRHVHFANKLAGKHLRFSL. The B box-type 2; atypical zinc-finger motif lies at 58–100; the sequence is CDICGERRALLFCQEDRAILCRECDIPIHQANEHTKKHNRFLL. The tract at residues 112–153 is disordered; it reads YPRASNSNSAAAFGRAKTRPKSVSSEVPSSASNEVFTSSSST. Residues 133-153 are compositionally biased toward low complexity; sequence SVSSEVPSSASNEVFTSSSST.

Interacts with MED25 and COP1. In terms of processing, COP1-mediated ubiquitination and subsequent proteasomal degradation of BBX20 occurs in the dark.

It localises to the nucleus. Acts as a positive regulator of seedling photomorphogenesis. Plays a negative role in brassinosteroid responses. The sequence is that of B-box zinc finger protein 20 from Arabidopsis thaliana (Mouse-ear cress).